The sequence spans 497 residues: Long chain base biosynthesis protein 2c (497 aa).

A helical membrane pass occupies residues 4–24 (VPFVTAVTTVFSYGVIFGFGH). An N6-(pyridoxal phosphate)lysine modification is found at lysine 319.

This sequence belongs to the class-II pyridoxal-phosphate-dependent aminotransferase family. In terms of assembly, heterodimer with LCB1. Component of the serine palmitoyltransferase (SPT) complex, composed of LCB1 and LCB2. Pyridoxal 5'-phosphate is required as a cofactor.

It localises to the endoplasmic reticulum membrane. The enzyme catalyses L-serine + hexadecanoyl-CoA + H(+) = 3-oxosphinganine + CO2 + CoA. The protein operates within lipid metabolism; sphingolipid metabolism. Serine palmitoyltransferase (SPT). The heterodimer formed with LCB1 constitutes the catalytic core. The polypeptide is Long chain base biosynthesis protein 2c (Oryza sativa subsp. japonica (Rice)).